A 466-amino-acid chain; its full sequence is Cysteine--tRNA ligase (466 aa).

Cys29 is a Zn(2+) binding site. Residues 31 to 41 (PTVYNYIHIGN) carry the 'HIGH' region motif. Residues Cys209, His234, and Glu238 each coordinate Zn(2+). The 'KMSKS' region signature appears at 266 to 270 (KMSKS). An ATP-binding site is contributed by Lys269. At Ser270 the chain carries Phosphoserine.

The protein belongs to the class-I aminoacyl-tRNA synthetase family. As to quaternary structure, monomer. Zn(2+) serves as cofactor.

The protein localises to the cytoplasm. The catalysed reaction is tRNA(Cys) + L-cysteine + ATP = L-cysteinyl-tRNA(Cys) + AMP + diphosphate. This chain is Cysteine--tRNA ligase (cysS), found in Halalkalibacterium halodurans (strain ATCC BAA-125 / DSM 18197 / FERM 7344 / JCM 9153 / C-125) (Bacillus halodurans).